A 151-amino-acid chain; its full sequence is uncharacterized protein (151 aa).

The protein to M.jannaschii MJ1244 and MJ1245.

This is an uncharacterized protein from Methanothermobacter thermautotrophicus (strain ATCC 29096 / DSM 1053 / JCM 10044 / NBRC 100330 / Delta H) (Methanobacterium thermoautotrophicum).